A 587-amino-acid chain; its full sequence is 5-aminolevulinate synthase, erythroid-specific, mitochondrial (587 aa).

A mitochondrion-targeting transit peptide spans 1–49; the sequence is MVAAAMLLRSCPVLSQGPTGLLGKVAKTYQFLFSIGRCPILATQGPTCS. Arg163 contributes to the succinyl-CoA binding site. Cys258 and Phe259 together coordinate pyridoxal 5'-phosphate. Residues Ser280 and Lys299 each coordinate succinyl-CoA. Pyridoxal 5'-phosphate contacts are provided by Ser332, His360, and Thr388. Lys391 is an active-site residue. N6-(pyridoxal phosphate)lysine is present on Lys391. 2 residues coordinate pyridoxal 5'-phosphate: Thr420 and Thr421. Thr508 is a binding site for succinyl-CoA.

This sequence belongs to the class-II pyridoxal-phosphate-dependent aminotransferase family. In terms of assembly, homodimer. Interacts with SUCLA2. Pyridoxal 5'-phosphate serves as cofactor. As to expression, predomnantly expressed in erythroid cells.

The protein localises to the mitochondrion inner membrane. The protein resides in the mitochondrion. It carries out the reaction succinyl-CoA + glycine + H(+) = 5-aminolevulinate + CO2 + CoA. It participates in porphyrin-containing compound metabolism; protoporphyrin-IX biosynthesis; 5-aminolevulinate from glycine: step 1/1. Its function is as follows. Catalyzes the pyridoxal 5'-phosphate (PLP)-dependent condensation of succinyl-CoA and glycine to form aminolevulinic acid (ALA), with CoA and CO2 as by-products. Contributes significantly to heme formation during erythropoiesis. The chain is 5-aminolevulinate synthase, erythroid-specific, mitochondrial (Alas2) from Mus musculus (Mouse).